The chain runs to 416 residues: Probable 26S proteasome regulatory subunit rpn-6.2 (416 aa).

The region spanning 217–386 (YKTSFSYFYE…DTVVVYPKAD (170 aa)) is the PCI domain.

It belongs to the proteasome subunit S9 family. Component of the lid subcomplex of the 19S proteasome regulatory particle complex (also named PA700 complex). The 26S proteasome consists of a 20S proteasome core and two 19S regulatory subunits.

Its function is as follows. Component of the lid subcomplex of the 26S proteasome, a multiprotein complex involved in the ATP-dependent degradation of ubiquitinated proteins. In the complex, rpn-6.2 is required for proteasome assembly. This chain is Probable 26S proteasome regulatory subunit rpn-6.2 (rpn-6.2), found in Caenorhabditis elegans.